A 337-amino-acid chain; its full sequence is MKVLVTGATSGLGRNAVEFLCQKGISVRATGRNEAMGKLLEKMGAEFVPADLTELVSSQAKVMLAGIDTLWHCSSFTSPWGTQQAFDLANVRATRRLGEWAVAWGVRNFIHISSPSLYFDYHHHRDIKEDFRPHRFANEFARSKAASEEVINMLSQANPQTRFTILRPQSLFGPHDKVFIPRLAHMMHHYGSILLPHGGSALVDMTYYENAVHAMWLASQEACDKLPSGRVYNITNGEHRTLRSIVQKLIDELNIDCRIRSVPYPMLDMIARSMERLGRKSAKEPPLTHYGVSKLNFDFTLDITRAQEELGYQPVITLDEGIEKTAAWLRDHGKLPR.

Belongs to the NAD(P)-dependent epimerase/dehydratase family.

This is an uncharacterized protein from Escherichia coli (strain K12).